Consider the following 218-residue polypeptide: Large ribosomal subunit protein uL3 (218 aa).

The protein belongs to the universal ribosomal protein uL3 family. In terms of assembly, part of the 50S ribosomal subunit. Forms a cluster with proteins L14 and L19.

Its function is as follows. One of the primary rRNA binding proteins, it binds directly near the 3'-end of the 23S rRNA, where it nucleates assembly of the 50S subunit. This is Large ribosomal subunit protein uL3 from Corynebacterium aurimucosum (strain ATCC 700975 / DSM 44827 / CIP 107346 / CN-1) (Corynebacterium nigricans).